A 461-amino-acid chain; its full sequence is D-phenylhydantoinase (461 aa).

Positions 59, 61, and 151 each coordinate a divalent metal cation. Position 151 is an N6-carboxylysine (Lys151). A substrate-binding site is contributed by Tyr156. The a divalent metal cation site is built by His182 and His239. Position 286 (Ser286) interacts with substrate. Residue Asp313 participates in a divalent metal cation binding. Asn335 is a substrate binding site.

The protein belongs to the metallo-dependent hydrolases superfamily. Hydantoinase/dihydropyrimidinase family. As to quaternary structure, homotetramer. A divalent metal cation serves as cofactor. Post-translationally, carboxylation allows a single lysine to coordinate two divalent metal cations.

It carries out the reaction D-5-phenylhydantoin + H2O = N-carbamoyl-D-phenylglycine + H(+). In terms of biological role, catalyzes the stereospecific hydrolysis of the cyclic amide bond of D-hydantoin derivatives with an aromatic side chains at the 5'-position. Has no activity on dihydropyrimidines. The physiological function is unknown. The sequence is that of D-phenylhydantoinase from Escherichia coli O7:K1 (strain IAI39 / ExPEC).